A 660-amino-acid chain; its full sequence is Acetyl-coenzyme A synthetase (660 aa).

CoA contacts are provided by residues 197–200 (RGGK) and threonine 317. ATP-binding positions include 397–399 (GEP), 421–426 (DTFWQT), aspartate 512, and arginine 528. Serine 536 serves as a coordination point for CoA. Arginine 539 lines the ATP pocket. Mg(2+) contacts are provided by valine 550 and valine 555. N6-acetyllysine is present on lysine 625.

This sequence belongs to the ATP-dependent AMP-binding enzyme family. It depends on Mg(2+) as a cofactor. In terms of processing, acetylated. Deacetylation by the SIR2-homolog deacetylase activates the enzyme.

It carries out the reaction acetate + ATP + CoA = acetyl-CoA + AMP + diphosphate. Its pathway is ketone degradation; acetoin degradation. Its function is as follows. Catalyzes the conversion of acetate into acetyl-CoA (AcCoA), an essential intermediate at the junction of anabolic and catabolic pathways. AcsA undergoes a two-step reaction. In the first half reaction, AcsA combines acetate with ATP to form acetyl-adenylate (AcAMP) intermediate. In the second half reaction, it can then transfer the acetyl group from AcAMP to the sulfhydryl group of CoA, forming the product AcCoA. Although acetate is the preferred substrate of AcsA, propionate is also used, but at a diminished rate compared with that of acetate. Fatty acids with more than three carbon atoms are usually not accepted as substrates by AcsA. In Cupriavidus necator (strain ATCC 17699 / DSM 428 / KCTC 22496 / NCIMB 10442 / H16 / Stanier 337) (Ralstonia eutropha), this protein is Acetyl-coenzyme A synthetase.